A 148-amino-acid chain; its full sequence is uncharacterized protein (148 aa).

Residues 1–35 (MRCVTRTRNWWRRAARMPRAGSSAWWVAVCKQVCT) form the signal peptide.

It is found in the secreted. This is an uncharacterized protein from Homo sapiens (Human).